A 497-amino-acid polypeptide reads, in one-letter code: Cytoplasmic dynein 1 light intermediate chain 2 (497 aa).

Position 61-68 (61-68) interacts with ATP; the sequence is GEDGSGKT. Disordered regions lie at residues 187 to 206, 366 to 408, 423 to 461, and 474 to 497; these read PEEGCQGSPQRRGPLTSGSD, QQES…IKNN, LSKKTGSPGSPSAGGVQSTAKKSGTEGEPQSFRSLTEQC, and QEELDRMTRKPDSMVTNSSTENEA. 3 positions are modified to phosphoserine: S194, S369, and S377. R383 carries the omega-N-methylarginine modification. Over residues 423 to 444 the composition is skewed to polar residues; the sequence is LSKKTGSPGSPSAGGVQSTAKK. T427 is subject to Phosphothreonine. Residues S429 and S432 each carry the phosphoserine modification. A compositionally biased stretch (basic and acidic residues) spans 476 to 485; it reads ELDRMTRKPD. Positions 487–497 are enriched in polar residues; it reads MVTNSSTENEA.

Belongs to the dynein light intermediate chain family. As to quaternary structure, homodimer. The cytoplasmic dynein 1 complex consists of two catalytic heavy chains (HCs) and a number of non-catalytic subunits presented by intermediate chains (ICs), light intermediate chains (LICs) and light chains (LCs); the composition seems to vary in respect to the IC, LIC and LC composition. The heavy chain homodimer serves as a scaffold for the probable homodimeric assembly of the respective non-catalytic subunits. The ICs and LICs bind directly to the HC dimer and the LCs assemble on the IC dimer. Self-associates. Interacts with DYNC1H1; DYNC1LI1 and DYNC1LI2 bind mutually exclusive to DYNC1H1. In terms of tissue distribution, ubiquitous.

It is found in the cytoplasm. Its subcellular location is the cytoskeleton. In terms of biological role, acts as one of several non-catalytic accessory components of the cytoplasmic dynein 1 complex that are thought to be involved in linking dynein to cargos and to adapter proteins that regulate dynein function. Cytoplasmic dynein 1 acts as a motor for the intracellular retrograde motility of vesicles and organelles along microtubules. May play a role in binding dynein to membranous organelles or chromosomes. This is Cytoplasmic dynein 1 light intermediate chain 2 (Dync1li2) from Rattus norvegicus (Rat).